The following is a 545-amino-acid chain: E3 ubiquitin-protein ligase ipaH9.8 (545 aa).

The segment at 1–242 (MLPINNNFSL…YHGPRIYFSM (242 aa)) is interaction with target proteins. 8 LRR repeats span residues 57–77 (NSDELRLDRLNLSSLPDNLPA), 78–99 (QITLLNVSYNQLTNLPELPVTL), 100–117 (KKLYSASNKLSELPVLPP), 118–139 (ALESLQVQHNELENLPALPDSL), 140–157 (LTMNISYNEIVSLPSLPL), 158–179 (ALKNLRATRNFLTELPAFSEGN), 182–203 (VVREYFFDRNQISHIPESILNL), and 205–228 (NECSIHISDNPLSSHALQALQRLT). The interval 243–250 (SDGQQNTL) is linker. Positions 251–545 (HRPLADAVTA…SENGSQLHHS (295 aa)) are E3 ubiquitin-protein ligase catalytic domain. An NEL domain is found at 253-545 (PLADAVTAWF…SENGSQLHHS (293 aa)). C337 (glycyl thioester intermediate) is an active-site residue.

The protein belongs to the LRR-containing bacterial E3 ligase family. In terms of assembly, also interacts with human and mouse U2AF1 (U2AF35). In terms of processing, ubiquitinated in the presence of host E1 ubiquitin-activating enzyme, E2 ubiquitin-conjugating enzyme and ubiquitin.

It localises to the secreted. The protein localises to the host cytoplasm. The protein resides in the host nucleus. It catalyses the reaction S-ubiquitinyl-[E2 ubiquitin-conjugating enzyme]-L-cysteine + [acceptor protein]-L-lysine = [E2 ubiquitin-conjugating enzyme]-L-cysteine + N(6)-ubiquitinyl-[acceptor protein]-L-lysine.. Its activity is regulated as follows. Exists in an autoinhibited state in the absence of substrate protein, due to interactions of the leucine-rich repeats with NEL domain. Is activated upon binding to a substrate protein. Functionally, effector E3 ubiquitin ligase that interferes with host's ubiquitination pathway and modulates the acute inflammatory responses, thus facilitating bacterial colonization within the host cell. Interacts with IKBKG (NEMO) and TNIP1 (ABIN-1), a ubiquitin-binding adapter protein, which results in TNIP1-dependent 'Lys-27'-linked polyubiquitination of IKBKG. Consequently, polyubiquitinated IKBKG undergoes proteasome-dependent degradation, which perturbs NF-kappa-B activation during bacterial infection. Mediates polyubiquitination of host U2AF1, leading to its proteasomal degradation. Catalyzes 'Lys-48'-linked polyubiquitination and subsequent degradation of a subset of host guanylate-binding proteins (GBP1, GBP2, GBP4 and GBP6), thereby suppressing host cell defense. In contrast, host GBP3 and GBP7 are not ubiquitinated by IpaH9.8. Uses UBE2D2 (UBCH5B) as an E2 ubiquitin-conjugating enzyme. The polypeptide is E3 ubiquitin-protein ligase ipaH9.8 (ipaH9.8) (Shigella boydii serotype 4 (strain Sb227)).